Reading from the N-terminus, the 321-residue chain is Acetyl-coenzyme A carboxylase carboxyl transferase subunit alpha (321 aa).

One can recognise a CoA carboxyltransferase C-terminal domain in the interval R39–Q293.

Belongs to the AccA family. In terms of assembly, acetyl-CoA carboxylase is a heterohexamer composed of biotin carboxyl carrier protein (AccB), biotin carboxylase (AccC) and two subunits each of ACCase subunit alpha (AccA) and ACCase subunit beta (AccD).

Its subcellular location is the cytoplasm. The catalysed reaction is N(6)-carboxybiotinyl-L-lysyl-[protein] + acetyl-CoA = N(6)-biotinyl-L-lysyl-[protein] + malonyl-CoA. Its pathway is lipid metabolism; malonyl-CoA biosynthesis; malonyl-CoA from acetyl-CoA: step 1/1. Component of the acetyl coenzyme A carboxylase (ACC) complex. First, biotin carboxylase catalyzes the carboxylation of biotin on its carrier protein (BCCP) and then the CO(2) group is transferred by the carboxyltransferase to acetyl-CoA to form malonyl-CoA. The sequence is that of Acetyl-coenzyme A carboxylase carboxyl transferase subunit alpha from Azoarcus sp. (strain BH72).